Reading from the N-terminus, the 110-residue chain is Large ribosomal subunit protein uL22 (110 aa).

This sequence belongs to the universal ribosomal protein uL22 family. In terms of assembly, part of the 50S ribosomal subunit.

Functionally, this protein binds specifically to 23S rRNA; its binding is stimulated by other ribosomal proteins, e.g. L4, L17, and L20. It is important during the early stages of 50S assembly. It makes multiple contacts with different domains of the 23S rRNA in the assembled 50S subunit and ribosome. Its function is as follows. The globular domain of the protein is located near the polypeptide exit tunnel on the outside of the subunit, while an extended beta-hairpin is found that lines the wall of the exit tunnel in the center of the 70S ribosome. The polypeptide is Large ribosomal subunit protein uL22 (Marinomonas sp. (strain MWYL1)).